The primary structure comprises 115 residues: Cholecystokinin (115 aa).

The first 20 residues, Met-1–Thr-20, serve as a signal peptide directing secretion. Residues Gln-21–Leu-44 constitute a propeptide that is removed on maturation. Residues Val-23–Gly-52 are disordered. An O-linked (Xyl...) (chondroitin sulfate) serine glycan is attached at Ser-31. Tyr-97 is modified (sulfotyrosine). Phe-103 carries the post-translational modification Phenylalanine amide. Residues Ser-107–Ser-115 constitute a propeptide that is removed on maturation. A sulfotyrosine mark is found at Tyr-111 and Tyr-113.

The protein belongs to the gastrin/cholecystokinin family. As to quaternary structure, binds to CCK-A receptors in the pancreas and CCK-B receptors in the brain. The precursor is cleaved by proteases to produce a number of active cholecystokinins. Post-translationally, the precursor is cleaved by ACE, which removes the Gly-Arg-Arg peptide at the C-terminus, leading to mature hormone. As to expression, detected in cerebrospinal fluid and urine (at protein level).

It localises to the secreted. In terms of biological role, this peptide hormone induces gall bladder contraction and the release of pancreatic enzymes in the gut. Its function in the brain is not clear. Binding to CCK-A receptors stimulates amylase release from the pancreas, binding to CCK-B receptors stimulates gastric acid secretion. This is Cholecystokinin (CCK) from Homo sapiens (Human).